Reading from the N-terminus, the 229-residue chain is DNA mismatch repair protein MutH (229 aa).

This sequence belongs to the MutH family.

The protein localises to the cytoplasm. Its function is as follows. Sequence-specific endonuclease that cleaves unmethylated GATC sequences. It is involved in DNA mismatch repair. This Shigella boydii serotype 18 (strain CDC 3083-94 / BS512) protein is DNA mismatch repair protein MutH.